The following is a 253-amino-acid chain: FAS1 domain-containing protein CAGL0M08734g (253 aa).

The signal sequence occupies residues 1-16; the sequence is MVALKYVLVPVALVAA. In terms of domain architecture, FAS1 spans 84 to 248; that stretch reads DIYLDSQISV…GVILVIDATL (165 aa).

It is found in the vacuole. This chain is FAS1 domain-containing protein CAGL0M08734g, found in Candida glabrata (strain ATCC 2001 / BCRC 20586 / JCM 3761 / NBRC 0622 / NRRL Y-65 / CBS 138) (Yeast).